We begin with the raw amino-acid sequence, 336 residues long: tRNA N6-adenosine threonylcarbamoyltransferase (336 aa).

Fe cation contacts are provided by H114 and H118. Substrate contacts are provided by residues 136–140 (LVSGG), D169, G182, D186, and N275. D301 provides a ligand contact to Fe cation.

Belongs to the KAE1 / TsaD family. The cofactor is Fe(2+).

The protein resides in the cytoplasm. The enzyme catalyses L-threonylcarbamoyladenylate + adenosine(37) in tRNA = N(6)-L-threonylcarbamoyladenosine(37) in tRNA + AMP + H(+). Its function is as follows. Required for the formation of a threonylcarbamoyl group on adenosine at position 37 (t(6)A37) in tRNAs that read codons beginning with adenine. Is involved in the transfer of the threonylcarbamoyl moiety of threonylcarbamoyl-AMP (TC-AMP) to the N6 group of A37, together with TsaE and TsaB. TsaD likely plays a direct catalytic role in this reaction. The protein is tRNA N6-adenosine threonylcarbamoyltransferase of Streptococcus pneumoniae serotype 2 (strain D39 / NCTC 7466).